A 514-amino-acid chain; its full sequence is uncharacterized protein (514 aa).

It to E.coli YjjI.

This is an uncharacterized protein from Haemophilus influenzae (strain ATCC 51907 / DSM 11121 / KW20 / Rd).